The following is a 345-amino-acid chain: L-Ala-D/L-Glu epimerase (345 aa).

Residues Thr-134 and Lys-159 each contribute to the substrate site. Catalysis depends on Lys-161, which acts as the Proton acceptor; specific for (R)-substrate epimerization. Asp-188 is a Mg(2+) binding site. Asn-190 serves as a coordination point for substrate. Positions 216 and 241 each coordinate Mg(2+). The active-site Proton acceptor; specific for (S)-substrate epimerization is Lys-265. Positions 292, 317, and 319 each coordinate substrate.

The protein belongs to the mandelate racemase/muconate lactonizing enzyme family. The cofactor is Mg(2+).

The enzyme catalyses L-alanyl-L-glutamate = L-alanyl-D-glutamate. Its pathway is cell wall degradation; peptidoglycan degradation. In terms of biological role, catalyzes the epimerization of L-Ala-D-Glu to L-Ala-L-Glu and has probably a role in the metabolism of the murein peptide, of which L-Ala-D-Glu is a component. Is also able to catalyze the reverse reaction and the epimerization of a broad range of other dipeptides; is most efficient with L-Ala-D/L-Phe, L-Ala-D/L-Tyr, and L-Ala-D/L-His. The chain is L-Ala-D/L-Glu epimerase from Thermotoga maritima (strain ATCC 43589 / DSM 3109 / JCM 10099 / NBRC 100826 / MSB8).